Here is a 154-residue protein sequence, read N- to C-terminus: Large ribosomal subunit protein uL15 (154 aa).

Residues 1-57 are disordered; the sequence is MRFQDLHPQAGSRRRKRRIGRGIAAGQGASGGFGMRGQKSRSGRPTRPGFEGGQNPL. Residues 23 to 35 are compositionally biased toward gly residues; it reads IAAGQGASGGFGM.

It belongs to the universal ribosomal protein uL15 family. In terms of assembly, part of the 50S ribosomal subunit.

Binds to the 23S rRNA. The polypeptide is Large ribosomal subunit protein uL15 (Thermosynechococcus vestitus (strain NIES-2133 / IAM M-273 / BP-1)).